A 113-amino-acid chain; its full sequence is Hydrogenase maturation factor HybF (113 aa).

Ni(2+) is bound by residues His-2 and Glu-3. Cys-73, Cys-76, Cys-89, and Cys-92 together coordinate Zn(2+).

The protein belongs to the HypA/HybF family. HybF subfamily.

In terms of biological role, involved in the maturation of [NiFe] hydrogenases. Required for nickel insertion into the metal center of the hydrogenase. In Salmonella typhi, this protein is Hydrogenase maturation factor HybF.